The sequence spans 264 residues: Thymidylate synthase (264 aa).

Arg21 is a binding site for dUMP. His51 contributes to the (6R)-5,10-methylene-5,6,7,8-tetrahydrofolate binding site. 126–127 (RR) is a binding site for dUMP. Residue Cys146 is the Nucleophile of the active site. Residues 166–169 (RSCD), Asn177, and 207–209 (HLY) contribute to the dUMP site. Asp169 serves as a coordination point for (6R)-5,10-methylene-5,6,7,8-tetrahydrofolate. Ala263 serves as a coordination point for (6R)-5,10-methylene-5,6,7,8-tetrahydrofolate.

Belongs to the thymidylate synthase family. Bacterial-type ThyA subfamily. Homodimer.

The protein localises to the cytoplasm. It catalyses the reaction dUMP + (6R)-5,10-methylene-5,6,7,8-tetrahydrofolate = 7,8-dihydrofolate + dTMP. Its pathway is pyrimidine metabolism; dTTP biosynthesis. Functionally, catalyzes the reductive methylation of 2'-deoxyuridine-5'-monophosphate (dUMP) to 2'-deoxythymidine-5'-monophosphate (dTMP) while utilizing 5,10-methylenetetrahydrofolate (mTHF) as the methyl donor and reductant in the reaction, yielding dihydrofolate (DHF) as a by-product. This enzymatic reaction provides an intracellular de novo source of dTMP, an essential precursor for DNA biosynthesis. The chain is Thymidylate synthase from Shigella flexneri serotype 5b (strain 8401).